Consider the following 409-residue polypeptide: Glycogenin (409 aa).

Residues L8, Y14, and R80 each contribute to the UDP site. Positions 8, 14, 80, 89, 105, 107, 140, 141, 169, 172, and 173 each coordinate UDP-alpha-D-glucose. Residues D105 and D107 each contribute to the UDP site. Residues D105 and D107 each contribute to the Mn(2+) site. Y212 is a glycosylation site (O-linked (Glc...) tyrosine). UDP is bound by residues H229, G232, and K235. H229 serves as a coordination point for Mn(2+). The UDP-alpha-D-glucose site is built by G232 and K235. The interval 283–303 is disordered; sequence RIEEDSHETEEKVDEEVSISE.

It belongs to the glycosyltransferase 8 family. Glycogenin subfamily. Requires Mn(2+) as cofactor.

The protein localises to the cytoplasm. Its subcellular location is the vacuole. The catalysed reaction is L-tyrosyl-[glycogenin] + UDP-alpha-D-glucose = alpha-D-glucosyl-L-tyrosyl-[glycogenin] + UDP + H(+). It carries out the reaction [1,4-alpha-D-glucosyl](n)-L-tyrosyl-[glycogenin] + UDP-alpha-D-glucose = [1,4-alpha-D-glucosyl](n+1)-L-tyrosyl-[glycogenin] + UDP + H(+). Glycogenin participates in the glycogen biosynthetic process along with glycogen synthase and glycogen branching enzyme. It catalyzes the formation of a short alpha (1,4)-glucosyl chain covalently attached via a glucose 1-O-tyrosyl linkage to internal tyrosine residues and these chains act as primers for the elongation reaction catalyzed by glycogen synthase. The sequence is that of Glycogenin from Komagataella phaffii (strain GS115 / ATCC 20864) (Yeast).